We begin with the raw amino-acid sequence, 177 residues long: ATP synthase subunit delta (177 aa).

This sequence belongs to the ATPase delta chain family. In terms of assembly, F-type ATPases have 2 components, F(1) - the catalytic core - and F(0) - the membrane proton channel. F(1) has five subunits: alpha(3), beta(3), gamma(1), delta(1), epsilon(1). F(0) has three main subunits: a(1), b(2) and c(10-14). The alpha and beta chains form an alternating ring which encloses part of the gamma chain. F(1) is attached to F(0) by a central stalk formed by the gamma and epsilon chains, while a peripheral stalk is formed by the delta and b chains.

The protein localises to the cell inner membrane. In terms of biological role, f(1)F(0) ATP synthase produces ATP from ADP in the presence of a proton or sodium gradient. F-type ATPases consist of two structural domains, F(1) containing the extramembraneous catalytic core and F(0) containing the membrane proton channel, linked together by a central stalk and a peripheral stalk. During catalysis, ATP synthesis in the catalytic domain of F(1) is coupled via a rotary mechanism of the central stalk subunits to proton translocation. Its function is as follows. This protein is part of the stalk that links CF(0) to CF(1). It either transmits conformational changes from CF(0) to CF(1) or is implicated in proton conduction. In Shewanella oneidensis (strain ATCC 700550 / JCM 31522 / CIP 106686 / LMG 19005 / NCIMB 14063 / MR-1), this protein is ATP synthase subunit delta.